Here is a 207-residue protein sequence, read N- to C-terminus: ATP synthase subunit a (207 aa).

The next 6 membrane-spanning stretches (helical) occupy residues 3–23, 62–82, 88–108, 119–139, 158–178, and 180–200; these read QHVI…TIFA, LIAS…IPGL, NLNT…FEGI, FLGP…LSHL, LISV…VMLI, and LIAV…YIAG.

It belongs to the ATPase A chain family. In terms of assembly, F-type ATPases have 2 components, CF(1) - the catalytic core - and CF(0) - the membrane proton channel. CF(1) has five subunits: alpha(3), beta(3), gamma(1), delta(1), epsilon(1). CF(0) has three main subunits: a(1), b(2) and c(9-12). The alpha and beta chains form an alternating ring which encloses part of the gamma chain. CF(1) is attached to CF(0) by a central stalk formed by the gamma and epsilon chains, while a peripheral stalk is formed by the delta and b chains.

Its subcellular location is the cell inner membrane. Its function is as follows. Key component of the proton channel; it plays a direct role in the translocation of protons across the membrane. This is ATP synthase subunit a from Sulfurihydrogenibium sp. (strain YO3AOP1).